Reading from the N-terminus, the 515-residue chain is Protein aaim-1 (515 aa).

The signal sequence occupies residues 1 to 16; it reads MRLLFFFSILYTASLC. N-linked (GlcNAc...) asparagine glycosylation is found at asparagine 46 and asparagine 127. The disordered stretch occupies residues 248-267; that stretch reads RRTDPNSKFKPRPTTSQSNG. Asparagine 447 is a glycosylation site (N-linked (GlcNAc...) asparagine).

In terms of tissue distribution, expressed in the terminal bulb of the pharynx and the posterior of the intestine (at protein level). Expressed by intestinal cells and secreted into the intestinal lumen (at protein level).

It is found in the secreted. Functionally, plays a role in promoting resistance to bacterial pathogens such as P.aeruginosa by inhibiting bacterial intestinal colonization. (Microbial infection) Promotes infection by microsporidian pathogens such as N.parisii in the early larval stages of development. Involved in ensuring the proper orientation and location of the spore proteins of N.parisii during intestinal cell invasion. This Caenorhabditis elegans protein is Protein aaim-1.